Reading from the N-terminus, the 489-residue chain is Cytochrome P450 302a1, mitochondrial (489 aa).

Cysteine 434 is a heme binding site.

The protein belongs to the cytochrome P450 family. Heme serves as cofactor. As to expression, complex coexpression pattern of dib (disembodied) and sad (shade) in the early embryo that restricts to the prothoracic gland cells of the developing ring gland during late embryogenesis. In larvae and adult, coexpression is seen in prothoracic gland and follicle cells of the ovary. In adults, coexpression is seen in the follicle cells.

It localises to the mitochondrion membrane. It carries out the reaction 2,22-dideoxyecdysone + 2 reduced [adrenodoxin] + O2 + 2 H(+) = 2-deoxyecdysone + 2 oxidized [adrenodoxin] + H2O. It functions in the pathway steroid biosynthesis; ecdysteroid biosynthesis. Functionally, required for CNS development; negatively regulates glial cell division in the embryonic midline. Involved in the metabolism of insect hormones; responsible for ecdysteroid C22-hydroxylase activity. May be involved in the breakdown of synthetic insecticides. The chain is Cytochrome P450 302a1, mitochondrial from Drosophila melanogaster (Fruit fly).